Reading from the N-terminus, the 631-residue chain is UvrABC system protein C (631 aa).

The 80-residue stretch at 26–105 (SSPGVYQFKN…IKELKPRYNV (80 aa)) folds into the GIY-YIG domain. In terms of domain architecture, UVR spans 219–254 (SATIRSLNERMLSFAKELKFEQAAELKTQIDSLKRY).

This sequence belongs to the UvrC family. As to quaternary structure, interacts with UvrB in an incision complex.

The protein resides in the cytoplasm. Functionally, the UvrABC repair system catalyzes the recognition and processing of DNA lesions. UvrC both incises the 5' and 3' sides of the lesion. The N-terminal half is responsible for the 3' incision and the C-terminal half is responsible for the 5' incision. The chain is UvrABC system protein C from Chlorobium phaeobacteroides (strain DSM 266 / SMG 266 / 2430).